A 435-amino-acid polypeptide reads, in one-letter code: Monodictyphenone cluster transcription factor (435 aa).

A DNA-binding region (zn(2)-C6 fungal-type) is located at residues C23 to C50. The interval Q117–T147 is disordered. Residues P130–T147 show a composition bias toward low complexity.

Its subcellular location is the nucleus. Functionally, transcription factor that regulates the expression of the gene cluster that mediates the biosynthesis of monodictyphenone, a prenyl xanthone derivative. This chain is Monodictyphenone cluster transcription factor, found in Emericella nidulans (strain FGSC A4 / ATCC 38163 / CBS 112.46 / NRRL 194 / M139) (Aspergillus nidulans).